A 71-amino-acid chain; its full sequence is Small ribosomal subunit protein bS21 (71 aa).

Belongs to the bacterial ribosomal protein bS21 family.

The protein is Small ribosomal subunit protein bS21 of Pseudoalteromonas atlantica (strain T6c / ATCC BAA-1087).